A 311-amino-acid polypeptide reads, in one-letter code: MVWENQTFNSIFILLGIFNHSPTHTFLFSLVLGIFSLALMENISMVLLIYIEKQLHTPMYFLLSQLSLMDLMLICTTLPKMIFSYLSGKKSISLAGCGTQIFFYVSLLGAECFLLAVMAYDRYVAICHPLQYTILMNPKLCVFMTVASWTLGSLDGIIVLAAVLSFSYCSSLEIHHFFCDVAALLPLSCTETSAFERLLVICCVVMLIFPVSVIILSYSHVLRAVIHMGSGESRRKAFTTCSSHLSVVGLYYGAAMFMYMRPASKHTPDQDKMVSAFYTILTPMLNPLIYSLRNKEVFRALQKVLKKRKLI.

Residues 1-25 are Extracellular-facing; sequence MVWENQTFNSIFILLGIFNHSPTHT. N-linked (GlcNAc...) asparagine glycosylation occurs at Asn-5. The helical transmembrane segment at 26–49 threads the bilayer; that stretch reads FLFSLVLGIFSLALMENISMVLLI. At 50–57 the chain is on the cytoplasmic side; that stretch reads YIEKQLHT. A helical membrane pass occupies residues 58–79; sequence PMYFLLSQLSLMDLMLICTTLP. Topologically, residues 80 to 100 are extracellular; sequence KMIFSYLSGKKSISLAGCGTQ. Cysteines 97 and 189 form a disulfide. Residues 101 to 120 form a helical membrane-spanning segment; the sequence is IFFYVSLLGAECFLLAVMAY. Residues 121 to 139 are Cytoplasmic-facing; that stretch reads DRYVAICHPLQYTILMNPK. Residues 140–158 traverse the membrane as a helical segment; that stretch reads LCVFMTVASWTLGSLDGII. Topologically, residues 159–195 are extracellular; the sequence is VLAAVLSFSYCSSLEIHHFFCDVAALLPLSCTETSAF. A helical membrane pass occupies residues 196 to 219; it reads ERLLVICCVVMLIFPVSVIILSYS. At 220 to 236 the chain is on the cytoplasmic side; sequence HVLRAVIHMGSGESRRK. A helical transmembrane segment spans residues 237 to 259; that stretch reads AFTTCSSHLSVVGLYYGAAMFMY. Residues 260–272 are Extracellular-facing; that stretch reads MRPASKHTPDQDK. The chain crosses the membrane as a helical span at residues 273–292; that stretch reads MVSAFYTILTPMLNPLIYSL. Residues 293–311 are Cytoplasmic-facing; sequence RNKEVFRALQKVLKKRKLI.

It belongs to the G-protein coupled receptor 1 family.

It is found in the cell membrane. In terms of biological role, odorant receptor. The sequence is that of Olfactory receptor 2M4 (OR2M4) from Homo sapiens (Human).